The sequence spans 1337 residues: Phosphoribosylformylglycinamidine synthase (1337 aa).

S215 is modified (phosphoserine). Residues G322–D333 and A402–F404 contribute to the ATP site. T619 and T622 each carry phosphothreonine. A705 provides a ligand contact to ATP. Mg(2+) contacts are provided by D706, E745, N749, and D908. Residue S910 coordinates ATP. One can recognise a Glutamine amidotransferase type-1 domain in the interval R1063 to V1301. C1157 functions as the Nucleophile in the catalytic mechanism. Residues H1296 and E1298 contribute to the active site.

It in the N-terminal section; belongs to the FGAMS family.

The protein resides in the cytoplasm. It catalyses the reaction N(2)-formyl-N(1)-(5-phospho-beta-D-ribosyl)glycinamide + L-glutamine + ATP + H2O = 2-formamido-N(1)-(5-O-phospho-beta-D-ribosyl)acetamidine + L-glutamate + ADP + phosphate + H(+). It participates in purine metabolism; IMP biosynthesis via de novo pathway; 5-amino-1-(5-phospho-D-ribosyl)imidazole from N(2)-formyl-N(1)-(5-phospho-D-ribosyl)glycinamide: step 1/2. In terms of biological role, phosphoribosylformylglycinamidine synthase involved in the purines biosynthetic pathway. Catalyzes the ATP-dependent conversion of formylglycinamide ribonucleotide (FGAR) and glutamine to yield formylglycinamidine ribonucleotide (FGAM) and glutamate. The polypeptide is Phosphoribosylformylglycinamidine synthase (Pfas) (Mus musculus (Mouse)).